Here is a 349-residue protein sequence, read N- to C-terminus: Secondary metabolism regulator LAE1 (349 aa).

Positions Met-1–Glu-46 are disordered. Over residues Asn-25 to Ala-38 the composition is skewed to polar residues.

It belongs to the methyltransferase superfamily. LaeA methyltransferase family. In terms of assembly, component of the heterotrimeric velvet complex composed of LAE1, VEL1 and VEL2; VEL1 acting as a bridging protein between LAE1 and VEL2.

It is found in the nucleus. The catalysed reaction is L-methionyl-[protein] + S-adenosyl-L-methionine = S-methyl-L-methionyl-[protein] + S-adenosyl-L-homocysteine. Methyltransferase that performs automethylation. No other methyl-accepting substrate has been identified yet. Component of the velvet transcription factor complex that acts as a global regulator for secondary metabolite gene expression. Controls the expression of the gamma-pentyl-pyrone gene clusters. Required for the expression of cellulase. Regulates asexual sporulation (conidiation) by environmental stimuli such as light and/or mechanical injury. Required for oxidative stress tolerance. Also plays a role in defense and parasitism on other fungi. The sequence is that of Secondary metabolism regulator LAE1 from Hypocrea atroviridis (strain ATCC 20476 / IMI 206040) (Trichoderma atroviride).